Here is a 430-residue protein sequence, read N- to C-terminus: Serine--tRNA ligase (430 aa).

The disordered stretch occupies residues 44-65; sequence TESLQAERNSRSKSIGAAKARG. 237 to 239 lines the L-serine pocket; sequence TAE. Position 268–270 (268–270) interacts with ATP; sequence RSE. L-serine is bound at residue E291. 355 to 358 provides a ligand contact to ATP; sequence EISS. S391 is a binding site for L-serine.

It belongs to the class-II aminoacyl-tRNA synthetase family. Type-1 seryl-tRNA synthetase subfamily. As to quaternary structure, homodimer. The tRNA molecule binds across the dimer.

The protein resides in the cytoplasm. The catalysed reaction is tRNA(Ser) + L-serine + ATP = L-seryl-tRNA(Ser) + AMP + diphosphate + H(+). It carries out the reaction tRNA(Sec) + L-serine + ATP = L-seryl-tRNA(Sec) + AMP + diphosphate + H(+). It participates in aminoacyl-tRNA biosynthesis; selenocysteinyl-tRNA(Sec) biosynthesis; L-seryl-tRNA(Sec) from L-serine and tRNA(Sec): step 1/1. Functionally, catalyzes the attachment of serine to tRNA(Ser). Is also able to aminoacylate tRNA(Sec) with serine, to form the misacylated tRNA L-seryl-tRNA(Sec), which will be further converted into selenocysteinyl-tRNA(Sec). The sequence is that of Serine--tRNA ligase from Edwardsiella ictaluri (strain 93-146).